A 79-amino-acid polypeptide reads, in one-letter code: Small ribosomal subunit protein bS16 (79 aa).

Belongs to the bacterial ribosomal protein bS16 family.

This chain is Small ribosomal subunit protein bS16, found in Buchnera aphidicola subsp. Acyrthosiphon pisum (strain 5A).